The chain runs to 666 residues: UvrABC system protein B (666 aa).

Residues 25-412 (EQVQAGAPYQ…EEQIVEQVIR (388 aa)) enclose the Helicase ATP-binding domain. 38–45 (GATGTGKT) lines the ATP pocket. The short motif at 91 to 114 (YYDYYQPEAYIPVTDTYIAKTASI) is the Beta-hairpin element. Residues 429–595 (QVDDLLAEIQ…PIIKRSSNAI (167 aa)) enclose the Helicase C-terminal domain. The UVR domain maps to 626-661 (PNLITQLEAQMKEAAKNLEFEEAAQYRDRIKKLRER).

It belongs to the UvrB family. In terms of assembly, forms a heterotetramer with UvrA during the search for lesions. Interacts with UvrC in an incision complex.

The protein resides in the cytoplasm. The UvrABC repair system catalyzes the recognition and processing of DNA lesions. A damage recognition complex composed of 2 UvrA and 2 UvrB subunits scans DNA for abnormalities. Upon binding of the UvrA(2)B(2) complex to a putative damaged site, the DNA wraps around one UvrB monomer. DNA wrap is dependent on ATP binding by UvrB and probably causes local melting of the DNA helix, facilitating insertion of UvrB beta-hairpin between the DNA strands. Then UvrB probes one DNA strand for the presence of a lesion. If a lesion is found the UvrA subunits dissociate and the UvrB-DNA preincision complex is formed. This complex is subsequently bound by UvrC and the second UvrB is released. If no lesion is found, the DNA wraps around the other UvrB subunit that will check the other stand for damage. The protein is UvrABC system protein B of Synechococcus sp. (strain ATCC 27144 / PCC 6301 / SAUG 1402/1) (Anacystis nidulans).